The chain runs to 899 residues: Plasma membrane ATPase (899 aa).

The segment at 1-72 (MSAATEPTKE…TDPSYGLTSD (72 aa)) is disordered. At 1 to 96 (MSAATEPTKE…SEETENLFVK (96 aa)) the chain is on the cytoplasmic side. Over residues 17–29 (DSDDEDEDIDQLI) the composition is skewed to acidic residues. A helical membrane pass occupies residues 97–117 (FLMFFIGPIQFVMEAAAILAA). The Extracellular portion of the chain corresponds to 118–121 (GLED). The helical transmembrane segment at 122–141 (WVDFGVICGLLFLNAAVGFI) threads the bilayer. At 142-272 (QEYQAGSIVD…GSGHFTEVLN (131 aa)) the chain is on the cytoplasmic side. Residues 273 to 294 (GIGTILLILVIVTLLLVWVASF) traverse the membrane as a helical segment. The Extracellular segment spans residues 295-305 (YRTNKIVRILR). Residues 306-328 (YTLAITIVGVPVGLPAVVTTTMA) form a helical membrane-spanning segment. Over 329–700 (VGAAYLAKKQ…IAILNRSLNI (372 aa)) the chain is Cytoplasmic. D359 (4-aspartylphosphate intermediate) is an active-site residue. Residues D615 and D619 each coordinate Mg(2+). The chain crosses the membrane as a helical span at residues 701–719 (DLVVFIAIFADVATLAIAY). Topologically, residues 720 to 735 (DNAPYSPKPVKWNLRR) are extracellular. Residues 736–755 (LWGMSVILGIILAIGTWITL) form a helical membrane-spanning segment. Topologically, residues 756 to 805 (TTMFVPKGGIIQNFGSIDGVLFLQISLTENWLIFITRAAGPFWSSIPSWQ) are cytoplasmic. The chain crosses the membrane as a helical span at residues 806-826 (LSGAVLIVDIIATMFCLFGWW). At 827-838 (SQNWNDIVTVVR) the chain is on the extracellular side. A helical membrane pass occupies residues 839–855 (VWIFSFGVFCVMGGAYY). Topologically, residues 856–899 (MMSESEAFDRFMNGKSRRDKPSGRSVEDFLMAMQRVSTQHEKEN) are cytoplasmic.

It belongs to the cation transport ATPase (P-type) (TC 3.A.3) family. Type IIIA subfamily.

It is found in the cell membrane. It carries out the reaction ATP + H2O + H(+)(in) = ADP + phosphate + 2 H(+)(out). Activated by high pH or also by potassium ions when the medium pH is low. Its function is as follows. The plasma membrane ATPase of plants and fungi is a hydrogen ion pump. The proton gradient it generates drives the active transport of nutrients by H(+)-symport. The resulting external acidification and/or internal alkinization may mediate growth responses. This chain is Plasma membrane ATPase (PMA1), found in Kluyveromyces lactis (strain ATCC 8585 / CBS 2359 / DSM 70799 / NBRC 1267 / NRRL Y-1140 / WM37) (Yeast).